Consider the following 45-residue polypeptide: Enterotoxin (45 aa).

In terms of assembly, one of 3 components (of 35, 45 and 105 kDa) of the enterotoxin.

One of 3 components required for cytotoxicity (tested in African green monkey Vero cells); the complex is not hemolytic. This chain is Enterotoxin, found in Bacillus cereus.